A 306-amino-acid chain; its full sequence is Proteasome subunit beta (306 aa).

The propeptide at 1–67 (MTWPNRDQPA…GLPTDAVPHG (67 aa)) is removed in mature form; by autocatalysis. T68 functions as the Nucleophile in the catalytic mechanism.

This sequence belongs to the peptidase T1B family. In terms of assembly, the 20S proteasome core is composed of 14 alpha and 14 beta subunits that assemble into four stacked heptameric rings, resulting in a barrel-shaped structure. The two inner rings, each composed of seven catalytic beta subunits, are sandwiched by two outer rings, each composed of seven alpha subunits. The catalytic chamber with the active sites is on the inside of the barrel. Has a gated structure, the ends of the cylinder being occluded by the N-termini of the alpha-subunits. Is capped by the proteasome-associated ATPase, ARC.

The protein resides in the cytoplasm. The catalysed reaction is Cleavage of peptide bonds with very broad specificity.. It functions in the pathway protein degradation; proteasomal Pup-dependent pathway. Its activity is regulated as follows. The formation of the proteasomal ATPase ARC-20S proteasome complex, likely via the docking of the C-termini of ARC into the intersubunit pockets in the alpha-rings, may trigger opening of the gate for substrate entry. Interconversion between the open-gate and close-gate conformations leads to a dynamic regulation of the 20S proteasome proteolysis activity. In terms of biological role, component of the proteasome core, a large protease complex with broad specificity involved in protein degradation. The polypeptide is Proteasome subunit beta (Mycolicibacterium vanbaalenii (strain DSM 7251 / JCM 13017 / BCRC 16820 / KCTC 9966 / NRRL B-24157 / PYR-1) (Mycobacterium vanbaalenii)).